A 590-amino-acid chain; its full sequence is Arginine--tRNA ligase (590 aa).

The short motif at 138–148 (ANPTGPLHIGH) is the 'HIGH' region element.

Belongs to the class-I aminoacyl-tRNA synthetase family. Monomer.

The protein localises to the cytoplasm. The catalysed reaction is tRNA(Arg) + L-arginine + ATP = L-arginyl-tRNA(Arg) + AMP + diphosphate. This is Arginine--tRNA ligase from Orientia tsutsugamushi (strain Boryong) (Rickettsia tsutsugamushi).